The chain runs to 412 residues: Divalent metal cation transporter MntH (412 aa).

11 helical membrane-spanning segments follow: residues 19–39, 46–66, 94–114, 122–142, 156–176, 196–216, 241–261, 290–310, 322–342, 348–368, and 392–412; these read LALMGPAFIAAIGYIDPGNFA, ASFGYQLLWVVVWANLMAMLI, VWFYWVQAEIIAMATDLAEFI, LILGVSLLQGAVLTGIATFLI, VIGGLLLFVAAAYIVELFFSQ, AVFLAAGVLGATIMPHVIYLH, IAMTIAGFVNLAMMATAAAAF, IFGLSLVAAGLSSTVVGTLAG, IPLWVRRAVTMAPSFIVILMG, ILVMSQVLLSFGIALALVPLL, and AIVVLVVALNIWLLVGTALGL.

This sequence belongs to the NRAMP family.

It is found in the cell inner membrane. In terms of biological role, h(+)-stimulated, divalent metal cation uptake system. The protein is Divalent metal cation transporter MntH of Cronobacter sakazakii (strain ATCC BAA-894) (Enterobacter sakazakii).